Reading from the N-terminus, the 128-residue chain is uncharacterized protein (128 aa).

This is an uncharacterized protein from Vaccinia virus (strain Copenhagen) (VACV).